The primary structure comprises 405 residues: Glutamate-pyruvate aminotransferase AlaA (405 aa).

Residues G41 and N179 each coordinate L-alanine. The residue at position 240 (K240) is an N6-(pyridoxal phosphate)lysine. R378 contributes to the L-alanine binding site.

It belongs to the class-I pyridoxal-phosphate-dependent aminotransferase family. Homodimer. Pyridoxal 5'-phosphate serves as cofactor.

Its subcellular location is the cytoplasm. It carries out the reaction L-alanine + 2-oxoglutarate = pyruvate + L-glutamate. Its pathway is amino-acid biosynthesis; L-alanine biosynthesis. Functionally, involved in the biosynthesis of alanine. Catalyzes the transamination of pyruvate by glutamate, leading to the formation of L-alanine and 2-oxoglutarate. Is also able to catalyze the reverse reaction. This Escherichia coli (strain K12) protein is Glutamate-pyruvate aminotransferase AlaA.